A 1198-amino-acid chain; its full sequence is Potassium/sodium hyperpolarization-activated cyclic nucleotide-gated channel 4 (1198 aa).

Residues 1–266 (MDKLPPSMRK…PYSDFRFYWD (266 aa)) lie on the Cytoplasmic side of the membrane. Positions 25–183 (IMDEEEDGEE…PASASCEQPS (159 aa)) are disordered. The segment covering 26 to 36 (MDEEEDGEEEG) has biased composition (acidic residues). Residues 105–118 (SRGGGSGGAGGGSS) show a composition bias toward gly residues. Residues 121–132 (HLHDSAEERRLI) are compositionally biased toward basic and acidic residues. Phosphoserine is present on Ser-139. Over residues 164 to 174 (ASPPPQQPPQP) the composition is skewed to pro residues. Residues 209–260 (GQSGFMQRQFGAMLQPGVNKFSLRMFGSQKAVEREQERVKSAGFWIIHPYSD) are involved in subunit assembly. A helical membrane pass occupies residues 267–287 (LTMLLLMVGNLIIIPVGITFF). Over 288–293 (KDENTT) the chain is Extracellular. A helical transmembrane segment spans residues 294 to 314 (PWIVFNVVSDTFFLIDLVLNF). Topologically, residues 315 to 340 (RTGIVVEDNTEIILDPQRIKMKYLKS) are cytoplasmic. The helical transmembrane segment at 341–361 (WFVVDFISSIPVDYIFLIVET) threads the bilayer. Over 362-368 (RIDSEVY) the chain is Extracellular. Residues 369–389 (KTARALRIVRFTKILSLLRLL) form a helical; Voltage-sensor membrane-spanning segment. At 390 to 420 (RLSRLIRYIHQWEEIFHMTYDLASAVVRIVN) the chain is on the cytoplasmic side. A helical membrane pass occupies residues 421–441 (LIGMMLLLCHWDGCLQFLVPM). Residues 442-464 (LQDFPHDCWVSINGMVNNSWGKQ) lie on the Extracellular side of the membrane. Asn-458 carries an N-linked (GlcNAc...) asparagine glycan. The segment at residues 465 to 486 (YSYALFKAMSHMLCIGYGRQAP) is an intramembrane region (pore-forming). Residues 487-496 (VGMSDVWLTM) are Extracellular-facing. Residues 497-517 (LSMIVGATCYAMFIGHATALI) traverse the membrane as a helical segment. Residues 518–1198 (QSLDSSRRQY…PVRSKLPSNL (681 aa)) are Cytoplasmic-facing. 3',5'-cyclic GMP-binding residues include Tyr-559, Lys-562, Phe-564, and Glu-566. The 3',5'-cyclic AMP site is built by Gly-659, Glu-660, Cys-662, Arg-669, Thr-670, Val-673, and Arg-710. The disordered stretch occupies residues 804-1198 (AIFRPPPGPG…PVRSKLPSNL (395 aa)). Composition is skewed to low complexity over residues 831–856 (SLIP…SSSS) and 866–880 (SAPP…SSSS). Pro residues predominate over residues 881-894 (SPPPGACSSPPAPT). 3 stretches are compositionally biased toward low complexity: residues 895-905 (PSTSTAATTTG), 913-937 (LGGS…SPQA), and 965-985 (RSPS…SPGL). Pro residues predominate over residues 1027-1040 (GHSPGPPRTFPSAP). The segment covering 1043–1054 (ASGSHGSLLLPP) has biased composition (low complexity). A phosphoserine mark is found at Ser-1103 and Ser-1106. The segment covering 1120 to 1132 (AGGGSGSSGGLGP) has biased composition (gly residues).

This sequence belongs to the potassium channel HCN family. In terms of assembly, homotetramer. The potassium channel is composed of a homo- or heterotetrameric complex of pore-forming subunits. Interacts with PEX5L with a 4:4 HCN4:PEX5L stoichiometry; reduces the effects of cAMP on the voltage-dependence and rate of activation. Interacts with IRAG1; regulates HCN4 channel activity. Interacts with IRAG2; regulates HCN4 channel activity. In terms of processing, S-palmitoylated. As to expression, highly expressed in pyramidal and granule layer of the hippocampus, in thalamus anterior nucleus, in the supraoptic nucleus in hypothalamus, in cerebellum, and in trapezoid nuclei and superior olivary complex in the auditory system. Detected in a subset of elongated cells in taste buds.

Its subcellular location is the cell membrane. The catalysed reaction is K(+)(in) = K(+)(out). It carries out the reaction Na(+)(in) = Na(+)(out). Its activity is regulated as follows. Activated by cAMP and at 100 times higher concentrationsand to a lesser extent by cGMP and cCMP. cAMP binding causes a conformation change that leads to the assembly of an active tetramer and channel opening. Binding of cAMP removes a tonic inhibition conferred by cyclic nucleotide-binding domain (CNBD) on channel opening. Cyclic dinucleotides can modulate HCN4 channel; cyclic dinucleotides acting as potent antagonists of cAMP. Inhibited by extracellular Cs(+) ions. Auxiliary subunits can also regulate HCN4 channel. IRAG1 causes a gain-of-function by shifting HCN4 activation to more depolarized membrane potentials in the absence of cAMP. In contrast, IRAG2 causes a loss-of-function by inhibiting cAMP-dependent potentiation of HCN4 activation. Functionally, hyperpolarization-activated ion channel that are permeable to Na(+) and K(+) ions with very slow activation and inactivation. Exhibits higher selectivity for K(+) over Na(+) ions. Contributes to the native pacemaker currents in heart (If) that regulate the rhythm of heart beat. Contributes to the native pacemaker currents in neurons (Ih). May mediate responses to sour stimuli. The protein is Potassium/sodium hyperpolarization-activated cyclic nucleotide-gated channel 4 (Hcn4) of Rattus norvegicus (Rat).